The sequence spans 228 residues: Sodium channel regulatory subunit beta-4 (228 aa).

Residues 1 to 30 (MPGAGDGGKAPARWLGTGLLGLFLLPVTLS) form the signal peptide. The Ig-like C2-type domain maps to 31 to 148 (LEVSVGKATD…NNLQHHATIF (118 aa)). Topologically, residues 31–162 (LEVSVGKATD…DRLEEVDNTV (132 aa)) are extracellular. N-linked (GlcNAc...) asparagine glycosylation is found at Asn-45, Asn-71, and Asn-113. A disulfide bond links Cys-53 and Cys-131. The helical transmembrane segment at 163–183 (TLIILAVVGGVIGLLILILLI) threads the bilayer. Topologically, residues 184–228 (KKLIIFILKKTREKKKECLVSSSGNDNTENGLPGSKAEEKPPSKV) are cytoplasmic. Residues 200-228 (ECLVSSSGNDNTENGLPGSKAEEKPPSKV) are disordered. Residues 203-213 (VSSSGNDNTEN) show a composition bias toward polar residues. Basic and acidic residues predominate over residues 219–228 (KAEEKPPSKV).

Belongs to the sodium channel auxiliary subunit SCN4B (TC 8.A.17) family. In terms of assembly, a voltage-gated sodium (Nav) channel consists of an ion-conducting pore-forming alpha subunit functional on its own that is regulated by one or more beta subunits. The beta subunit SCN4B is disulfide-linked to the pore-forming alpha subunit. Interacts with SCN1A; regulatory subunit of SCN1A/Nav1.1. Interacts with SCN2A; regulatory subunit of SCN2A/Nav1.2. Contains an interchain disulfide bond with SCN2A. In terms of processing, N-glycosylated. In terms of tissue distribution, expressed at a high level in dorsal root ganglia, at a lower level in brain, spinal cord, skeletal muscle and heart. Expressed in the atrium.

The protein resides in the cell membrane. Regulatory subunit of multiple voltage-gated sodium (Nav) channels directly mediating the depolarization of excitable membranes. Navs, also called VGSCs (voltage-gated sodium channels) or VDSCs (voltage-dependent sodium channels), operate by switching between closed and open conformations depending on the voltage difference across the membrane. In the open conformation they allow Na(+) ions to selectively pass through the pore, along their electrochemical gradient. The influx of Na+ ions provokes membrane depolarization, initiating the propagation of electrical signals throughout cells and tissues. The accessory beta subunits participate in localization and functional modulation of the Nav channels. Modulates the activity of SCN1A/Nav1.1. Modulates the activity of SCN2A/Nav1.2. The sequence is that of Sodium channel regulatory subunit beta-4 from Homo sapiens (Human).